A 114-amino-acid chain; its full sequence is Large ribosomal subunit protein uL22 (114 aa).

Belongs to the universal ribosomal protein uL22 family. Part of the 50S ribosomal subunit.

Functionally, this protein binds specifically to 23S rRNA; its binding is stimulated by other ribosomal proteins, e.g. L4, L17, and L20. It is important during the early stages of 50S assembly. It makes multiple contacts with different domains of the 23S rRNA in the assembled 50S subunit and ribosome. In terms of biological role, the globular domain of the protein is located near the polypeptide exit tunnel on the outside of the subunit, while an extended beta-hairpin is found that lines the wall of the exit tunnel in the center of the 70S ribosome. The chain is Large ribosomal subunit protein uL22 from Streptococcus agalactiae serotype Ia (strain ATCC 27591 / A909 / CDC SS700).